The following is a 348-amino-acid chain: MKERLEKLVKFMDENSIDRVFIAKPVNVYYFSGTSPLGGGYIIVDGDEATLYVPELEYEMAKEESKLPVVKFKKFDEIYEILKNTETLGIEGTLSYSMVENFKEKSNVKEFKKIDDVIKDLRIIKTKEEIEIIEKACEIADKAVMAAIEEITEGKREREVAAKVEYLMKMNGAEKPAFDTIIASGHRSALPHGVASDKRIERGDLVVIDLGALYNHYNSDITRTIVVGSPNEKQREIYEIVLEAQKRAVEAAKPGMTAKELDSIAREIIKEYGYGDYFIHSLGHGVGLEIHEWPRISQYDETVLKEGMVITIEPGIYIPKLGGVRIEDTVLITENGAKRLTKTERELL.

Co(2+) is bound by residues aspartate 209, aspartate 220, histidine 284, glutamate 313, and glutamate 327.

This sequence belongs to the peptidase M24B family. Archaeal-type prolidase subfamily. As to quaternary structure, homodimer. It depends on Co(2+) as a cofactor. Mn(2+) serves as cofactor.

It is found in the cytoplasm. The enzyme catalyses Xaa-L-Pro dipeptide + H2O = an L-alpha-amino acid + L-proline. Its function is as follows. Splits dipeptides with a prolyl in the C-terminal position and a nonpolar amino acid at the N-terminal position. This chain is Xaa-Pro dipeptidase (pepQ), found in Pyrococcus furiosus (strain ATCC 43587 / DSM 3638 / JCM 8422 / Vc1).